The primary structure comprises 465 residues: Ribulose bisphosphate carboxylase large chain (465 aa).

At lysine 4 the chain carries N6,N6,N6-trimethyllysine. Substrate is bound by residues asparagine 113 and threonine 163. Lysine 165 (proton acceptor) is an active-site residue. Lysine 167 provides a ligand contact to substrate. Residues lysine 191, aspartate 193, and glutamate 194 each contribute to the Mg(2+) site. Lysine 191 carries the post-translational modification N6-carboxylysine. The active-site Proton acceptor is histidine 284. Substrate-binding residues include arginine 285, histidine 317, and serine 369.

The protein belongs to the RuBisCO large chain family. Type I subfamily. In terms of assembly, heterohexadecamer of 8 large chains and 8 small chains; disulfide-linked. The disulfide link is formed within the large subunit homodimers. Requires Mg(2+) as cofactor. In terms of processing, the disulfide bond which can form in the large chain dimeric partners within the hexadecamer appears to be associated with oxidative stress and protein turnover.

The protein localises to the plastid. It localises to the chloroplast. The enzyme catalyses 2 (2R)-3-phosphoglycerate + 2 H(+) = D-ribulose 1,5-bisphosphate + CO2 + H2O. It catalyses the reaction D-ribulose 1,5-bisphosphate + O2 = 2-phosphoglycolate + (2R)-3-phosphoglycerate + 2 H(+). Functionally, ruBisCO catalyzes two reactions: the carboxylation of D-ribulose 1,5-bisphosphate, the primary event in carbon dioxide fixation, as well as the oxidative fragmentation of the pentose substrate in the photorespiration process. Both reactions occur simultaneously and in competition at the same active site. The polypeptide is Ribulose bisphosphate carboxylase large chain (Morus rubra (Red mulberry)).